A 306-amino-acid chain; its full sequence is MKSVGHFVPWLTDIRHLTDGTISEVFVGERKNSKKLYVIKVQGLVFKRPPHDAMRGKLILESIGHPHIERIVDSFIDNEAGSVYLITSFKSFVLSDVMDEISIDTKCKIVLQISSALEYLEKHGILHRDIHPNNILLDSMNGPAYLSDFSIAWSKQHPGEEVQELIPQIGTGHYRAIETLFGCHSYGHEVDRWTFGILIAELFSNQALFDDGSSEGWPSELRLTSSIIQTLGTPNPSMWPELSTFPDWNKFIFHEYPPKPWSEILPSVDTSIQYIVSHLVTYSNRASPSFVIESFPKVSARLSQYA.

Residues 11–306 (LTDIRHLTDG…KVSARLSQYA (296 aa)) enclose the Protein kinase domain. Residues 17–25 (LTDGTISEV) and K40 each bind ATP. The Proton acceptor role is filled by D129.

It belongs to the protein kinase superfamily. CMGC Ser/Thr protein kinase family. CDC2/CDKX subfamily.

It carries out the reaction L-seryl-[protein] + ATP = O-phospho-L-seryl-[protein] + ADP + H(+). The enzyme catalyses L-threonyl-[protein] + ATP = O-phospho-L-threonyl-[protein] + ADP + H(+). Acts as a CAK-activating kinase that specifically activates crk1 of the crk1-mcs2 CAK complex. The sequence is that of Serine/threonine-protein kinase csk1 (csk1) from Schizosaccharomyces pombe (strain 972 / ATCC 24843) (Fission yeast).